The chain runs to 71 residues: High-potential iron-sulfur protein (71 aa).

Gln-1 carries the post-translational modification Pyrrolidone carboxylic acid. [4Fe-4S] cluster is bound by residues Cys-37, Cys-40, Cys-50, and Cys-64.

The protein belongs to the high-potential iron-sulfur protein (HiPIP) family. In terms of assembly, homodimer.

Functionally, specific class of high-redox-potential 4Fe-4S ferredoxins. Functions in anaerobic electron transport in most purple and in some other photosynthetic bacteria and in at least one genus (Paracoccus) of halophilic, denitrifying bacteria. This chain is High-potential iron-sulfur protein (hip), found in Halomonas halodenitrificans (strain ATCC 12084 / NCIMB 8669) (Paracoccus halodenitrificans).